The following is a 65-amino-acid chain: Large ribosomal subunit protein bL35 (65 aa).

Belongs to the bacterial ribosomal protein bL35 family.

The protein is Large ribosomal subunit protein bL35 of Psychrobacter sp. (strain PRwf-1).